The chain runs to 442 residues: 5'-deoxyadenosine deaminase (442 aa).

His72 and His74 together coordinate Zn(2+). Positions 101 and 193 each coordinate substrate. His220 contributes to the Zn(2+) binding site. Residues Glu223 and Asp309 each contribute to the substrate site. Asp309 is a binding site for Zn(2+).

The protein belongs to the metallo-dependent hydrolases superfamily. MTA/SAH deaminase family. In terms of assembly, homotetramer. Zn(2+) serves as cofactor.

The enzyme catalyses 5'-deoxyadenosine + H2O + H(+) = 5'-deoxyinosine + NH4(+). It catalyses the reaction S-adenosyl-L-homocysteine + H2O + H(+) = S-inosyl-L-homocysteine + NH4(+). The catalysed reaction is S-methyl-5'-thioadenosine + H2O + H(+) = S-methyl-5'-thioinosine + NH4(+). It carries out the reaction adenosine + H2O + H(+) = inosine + NH4(+). The protein operates within amino-acid biosynthesis; S-adenosyl-L-methionine biosynthesis. In terms of biological role, catalyzes the deamination of three SAM-derived enzymatic products, namely 5'-deoxyadenosine, S-adenosyl-L-homocysteine, and 5'-methylthioadenosine, to produce the inosine analogs. Can also deaminate adenosine. The preferred substrate for this enzyme is 5'-deoxyadenosine, but all these substrates are efficiently deaminated. Likely functions in a S-adenosyl-L-methionine (SAM) recycling pathway from S-adenosyl-L-homocysteine (SAH) produced from SAM-dependent methylation reactions. May also be involved in the recycling of 5'-deoxyadenosine, whereupon the 5'-deoxyribose moiety of 5'-deoxyinosine is further metabolized to deoxyhexoses used for the biosynthesis of aromatic amino acids in methanogens. This Methanoregula boonei (strain DSM 21154 / JCM 14090 / 6A8) protein is 5'-deoxyadenosine deaminase.